We begin with the raw amino-acid sequence, 477 residues long: UDP-glycosyltransferase 71K1 (477 aa).

Residues S285, 350-351 (WA), 368-376 (HCGWNSILE), and 390-393 (YAEQ) each bind UDP-alpha-D-glucose.

It belongs to the UDP-glycosyltransferase family.

In terms of biological role, glycosyltransferase that possesses chalcone and flavonol 2'-O-glycosyltransferase activity. Converts phloretin to phlorizin (phloretin 2'-O-glucoside), a potent antioxidant. Possesses glycosyltransferase activity toward quercetin, isoliquiritigenin, butein and caffeic acid. This is UDP-glycosyltransferase 71K1 from Malus domestica (Apple).